Here is a 99-residue protein sequence, read N- to C-terminus: Protein translation factor SUI1 homolog (99 aa).

The protein belongs to the SUI1 family.

This is Protein translation factor SUI1 homolog from Picrophilus torridus (strain ATCC 700027 / DSM 9790 / JCM 10055 / NBRC 100828 / KAW 2/3).